The sequence spans 438 residues: MPLVIVAIGVILLLLLMIRFKMNGFIALVLVALAVGLMQGMPLDKVIGSIKAGVGGTLGSLALIMGFGAMLGKMLADCGGAQRIATTLIAKFGKKHIQWAVVLTGFTVGFALFYEVGFVLMLPLVFTIAASANIPLLYVGVPMAAALSVTHGFLPPHPGPTAIATIFNADMGKTLLYGTILAIPTVILAGPVYARVLKGIDKPIPEGLYSAKTFSEEEMPSFGVSVWTSLVPVVLMAMRAIAEMILPKGHAFLPVAEFLGDPVMATLIAVLIAMFTFGLNRGRSMDQINDTLVSSIKIIAMMLLIIGGGGAFKQVLVDSGVDKYIASMMHETNISPLLMAWSIAAVLRIALGSATVAAITAGGIAAPLIATTGVSPELMVIAVGSGSVIFSHVNDPGFWLFKEYFNLTIGETIKSWSMLETIISVCGLVGCLLLNMVI.

The next 13 helical transmembrane spans lie at 2–22 (PLVI…RFKM), 23–43 (NGFI…GMPL), 52–72 (AGVG…AMLG), 108–128 (VGFA…VFTI), 134–154 (IPLL…HGFL), 174–194 (TLLY…PVYA), 222–242 (FGVS…RAIA), 258–278 (FLGD…FTFG), 292–312 (LVSS…GGAF), 327–347 (SMMH…AAVL), 349–369 (IALG…APLI), 370–390 (ATTG…SVIF), and 418–438 (MLET…NMVI).

Belongs to the GntP permease family.

The protein resides in the cell inner membrane. The protein operates within carbohydrate acid metabolism; D-gluconate degradation. In terms of biological role, part of the gluconate utilization system Gnt-I; high-affinity intake of gluconate. The protein is High-affinity gluconate transporter (gntT) of Escherichia coli (strain K12).